The following is a 62-amino-acid chain: Calmodulin regulator protein PCP4 (62 aa).

The segment at 1 to 39 (MSERQGAGATNGKDKTSGENDGQKKVQEEFDIDMDAPET) is disordered. Positions 12 to 28 (GKDKTSGENDGQKKVQE) are enriched in basic and acidic residues. The segment at 28 to 40 (EEFDIDMDAPETE) is acidic; binds calcium and is required for modulating the calcium-binding kinetics of calmodulin. One can recognise an IQ domain in the interval 39 to 62 (TERAAVAIQSQFRKFQKKKAGSQS).

The protein belongs to the PCP4 family. Binds to both calcium-free and calcium-bound calmodulin. The affinity for the calcium-bound form is 50-fold greater.

Functionally, functions as a modulator of calcium-binding by calmodulin. Thereby, regulates calmodulin activity and the different processes it controls. For instance, may play a role in neuronal differentiation through activation of calmodulin-dependent kinase signaling pathways. This Homo sapiens (Human) protein is Calmodulin regulator protein PCP4.